The following is a 584-amino-acid chain: MLAKQTPLTKQMLSELLRASSSKPKQLKKIHAIVLRTGFSEKNSLLTQLLENLVVIGDMCYARQVFDEMHKPRIFLWNTLFKGYVRNQLPFESLLLYKKMRDLGVRPDEFTYPFVVKAISQLGDFSCGFALHAHVVKYGFGCLGIVATELVMMYMKFGELSSAEFLFESMQVKDLVAWNAFLAVCVQTGNSAIALEYFNKMCADAVQFDSFTVVSMLSACGQLGSLEIGEEIYDRARKEEIDCNIIVENARLDMHLKCGNTEAARVLFEEMKQRNVVSWSTMIVGYAMNGDSREALTLFTTMQNEGLRPNYVTFLGVLSACSHAGLVNEGKRYFSLMVQSNDKNLEPRKEHYACMVDLLGRSGLLEEAYEFIKKMPVEPDTGIWGALLGACAVHRDMILGQKVADVLVETAPDIGSYHVLLSNIYAAAGKWDCVDKVRSKMRKLGTKKVAAYSSVEFEGKIHFFNRGDKSHPQSKAIYEKLDEILKKIRKMGYVPDTCSVFHDVEMEEKECSLSHHSEKLAIAFGLIKGRPGHPIRVMKNLRTCDDCHAFSKFVSSLTSTEIIMRDKNRFHHFRNGVCSCKEFW.

A mitochondrion-targeting transit peptide spans 1–20 (MLAKQTPLTKQMLSELLRAS). 9 PPR repeats span residues 73–107 (RIFL…GVRP), 108–142 (DEFT…GFGC), 143–173 (LGIV…MQVK), 174–208 (DLVA…AVQF), 209–243 (DSFT…EIDC), 244–274 (NIIV…MKQR), 275–309 (NVVS…GLRP), 310–344 (NYVT…NDKN), and 348–378 (RKEH…MPVE). The type E motif stretch occupies residues 383-458 (IWGALLGACA…VAAYSSVEFE (76 aa)). The tract at residues 459–489 (GKIHFFNRGDKSHPQSKAIYEKLDEILKKIR) is type E(+) motif. Residues 490 to 584 (KMGYVPDTCS…NGVCSCKEFW (95 aa)) form a type DYW motif region.

This sequence belongs to the PPR family. PCMP-H subfamily.

The protein localises to the mitochondrion. The sequence is that of Pentatricopeptide repeat-containing protein At2g01510, mitochondrial (PCMP-H37) from Arabidopsis thaliana (Mouse-ear cress).